The primary structure comprises 194 residues: ATP-dependent Clp protease proteolytic subunit (194 aa).

S98 serves as the catalytic Nucleophile. H123 is an active-site residue.

It belongs to the peptidase S14 family. In terms of assembly, fourteen ClpP subunits assemble into 2 heptameric rings which stack back to back to give a disk-like structure with a central cavity, resembling the structure of eukaryotic proteasomes.

It localises to the cytoplasm. The catalysed reaction is Hydrolysis of proteins to small peptides in the presence of ATP and magnesium. alpha-casein is the usual test substrate. In the absence of ATP, only oligopeptides shorter than five residues are hydrolyzed (such as succinyl-Leu-Tyr-|-NHMec, and Leu-Tyr-Leu-|-Tyr-Trp, in which cleavage of the -Tyr-|-Leu- and -Tyr-|-Trp bonds also occurs).. Cleaves peptides in various proteins in a process that requires ATP hydrolysis. Has a chymotrypsin-like activity. Plays a major role in the degradation of misfolded proteins. The sequence is that of ATP-dependent Clp protease proteolytic subunit from Actinobacillus succinogenes (strain ATCC 55618 / DSM 22257 / CCUG 43843 / 130Z).